Reading from the N-terminus, the 436-residue chain is Trigger factor (436 aa).

The region spanning 161–246 (EDQLNIDFVG…VNTVSEPKLP (86 aa)) is the PPIase FKBP-type domain.

It belongs to the FKBP-type PPIase family. Tig subfamily.

The protein localises to the cytoplasm. It carries out the reaction [protein]-peptidylproline (omega=180) = [protein]-peptidylproline (omega=0). Its function is as follows. Involved in protein export. Acts as a chaperone by maintaining the newly synthesized protein in an open conformation. Functions as a peptidyl-prolyl cis-trans isomerase. This chain is Trigger factor, found in Pseudomonas savastanoi pv. phaseolicola (strain 1448A / Race 6) (Pseudomonas syringae pv. phaseolicola (strain 1448A / Race 6)).